A 320-amino-acid chain; its full sequence is Ferrochelatase (320 aa).

The Fe cation site is built by H194 and E275.

It belongs to the ferrochelatase family. Monomer.

The protein localises to the cytoplasm. The catalysed reaction is heme b + 2 H(+) = protoporphyrin IX + Fe(2+). It participates in porphyrin-containing compound metabolism; protoheme biosynthesis; protoheme from protoporphyrin-IX: step 1/1. Catalyzes the ferrous insertion into protoporphyrin IX. The sequence is that of Ferrochelatase from Escherichia coli O157:H7 (strain EC4115 / EHEC).